A 295-amino-acid chain; its full sequence is Zinc finger transcription factor pqm-1 (295 aa).

Residues 1–23 are disordered; that stretch reads MSFLNNDFGSPPATSSPPTTMPK. The span at 10 to 22 shows a compositional bias: low complexity; it reads SPPATSSPPTTMP. A C2H2-type 1; degenerate zinc finger spans residues 161-183; the sequence is YMCTVCRKVYGRYNSVSYHVTIY. Residues 227-249 form a C2H2-type 2 zinc finger; it reads RKCPHCRHVSKSPAMLEKHIRRH.

It belongs to the krueppel C2H2-type zinc-finger protein family. In terms of assembly, interacts with ceh-60.

It localises to the chromosome. It is found in the nucleus. Its subcellular location is the cytoplasm. Its function is as follows. Zinc finger transcription factor which acts as both a transcriptional activator and repressor. Binds to the promoters of genes that contain the 5'-CTTATCA-3' DNA consensus sequence in their regulatory region. Functions downstream of the Insulin/IGF-1-like signaling (IIS) mediated pathway. Involved in normal development, lifespan, stress response, lipid metabolism, innate immunity and exit from the developmentally arrested larval state known as dauer. Required for stress-induced expression of hsp-90 and resistance to heat stress, perhaps as part of a systemic stress signaling pathway. Involved in maintenance of proteostasis. Under hypoxic stress increases lipid levels by positively regulating fatty acid synthesis via fat-7 expression. Associates with homeobox protein ceh-60 at the promoters of some stress-responsive genes to regulate expression; may require phosphorylation for transcriptional repression activity. Acts downstream of nhr-14 to activate transcription of intestinal metal transporter smf-3, modulating innate immunity and iron uptake. May act downstream of the mTORC2 signaling mediated pathway. May act in a mutually exclusive manner with the FOXO transcription factor daf-16. In Caenorhabditis elegans, this protein is Zinc finger transcription factor pqm-1.